A 338-amino-acid polypeptide reads, in one-letter code: MGAPHEEIQALKRRREQNRLAQRRRRDNVRRRLRDLGLDTGSPASASQTSLCSSTDSRVTLNPHQSLRSTDFLSFETSNSDTEMSPYDPPLQSKLRLDSQIPLAEISFPSYASSVSPSSSAGPLSSSPSPSQRPFIDSTDLTSLQSVYNPTSLAVHLDESSMPCGEAEIPTRQDSNFPRTPNLKSLMSGCNDPSAYQPWILTSSTVGEQMSSQALPHSPGPQHCSTPLPAETRPRWTTALHMAVSQGNFSVMRLLLSYGADPNAVNSEGATALHVGVMNGNYTMVAELLQRGADPTLTNAAGWLPLHQAVHAGDEGCVRVLLEADQPVDYPISDLDYT.

Residues 1 to 10 (MGAPHEEIQA) are compositionally biased toward basic and acidic residues. Disordered stretches follow at residues 1–70 (MGAP…LRST) and 112–137 (ASSV…PFID). Over residues 11 to 33 (LKRRREQNRLAQRRRRDNVRRRL) the composition is skewed to basic residues. Over residues 42 to 70 (SPASASQTSLCSSTDSRVTLNPHQSLRST) the composition is skewed to polar residues. A compositionally biased stretch (low complexity) spans 112–130 (ASSVSPSSSAGPLSSSPSP). 3 ANK repeats span residues 235–264 (RWTT…DPNA), 268–297 (EGAT…DPTL), and 301–330 (AGWL…PVDY).

It functions in the pathway secondary metabolite biosynthesis. Functionally, transcription coregulator involved in regulation of gene cluster that mediates the biosynthesis of aspergillic acid, a hydroxamic acid-containing pyrazinone with aliphatic side chains that originates from leucine (Leu) and isoleucine (Ile). Aspergillic acid has antibiotic properties and was shown to be lethal to mice. The sequence is that of Ankyrin-repeat domain containing transcription coregulator asaA from Aspergillus flavus (strain ATCC 200026 / FGSC A1120 / IAM 13836 / NRRL 3357 / JCM 12722 / SRRC 167).